A 263-amino-acid chain; its full sequence is Transmembrane protein 176B (263 aa).

The next 4 helical transmembrane spans lie at 61-81 (LGVT…CLYF), 89-109 (AFGC…GTIV), 121-141 (VSCL…VLGV), and 197-217 (LFLA…VVSV). Phosphoserine is present on residues serine 231, serine 240, and serine 253. The segment at 239-263 (ESERKLLDGHPAPASPAKEKIPAIL) is disordered.

It belongs to the TMEM176 family. Ubiquitously expressed with higher expression in lung, liver, kidney and colon. Expressed in cerebellar granule cells.

It is found in the nucleus membrane. May play a role in the process of maturation of dendritic cells. Required for the development of cerebellar granule cells. This is Transmembrane protein 176B (Tmem176b) from Mus musculus (Mouse).